A 135-amino-acid polypeptide reads, in one-letter code: Probable transporter PD_1892 (135 aa).

Transmembrane regions (helical) follow at residues 4–24 (YWYPILGGILLGLSTVMLLLL), 45–65 (AQNIPFVVGLVLGPLLFTVIF), 71–91 (VTVAATWPTIIVAGLLVGLGT), and 114–134 (IVATAIFLISGMATATFMGVY).

The protein belongs to the TsuA/YedE (TC 9.B.102) family.

The protein localises to the cell inner membrane. The polypeptide is Probable transporter PD_1892 (Xylella fastidiosa (strain Temecula1 / ATCC 700964)).